The following is a 523-amino-acid chain: Cytochrome b5 reductase 4 (523 aa).

In terms of domain architecture, Cytochrome b5 heme-binding spans 54-130; sequence LIDVTEEELA…LKECLIGRMA (77 aa). Heme-binding residues include His-89 and His-112. The CS domain occupies 167 to 258; the sequence is ESHPWYDWFQ…KEPVSWKSLG (92 aa). The region spanning 275–387 is the FAD-binding FR-type domain; it reads LYYRKCRLAS…SNPQGTFSSF (113 aa). FAD-binding positions include 367–382 and 394–426; these read ENLTVGDYISISNPQG and DVFLVAAGTGITPMIRLLQHVLTCVSSLRKAKL.

It belongs to the flavoprotein pyridine nucleotide cytochrome reductase family. FAD serves as cofactor.

The protein localises to the endoplasmic reticulum. It catalyses the reaction 2 Fe(III)-[cytochrome b5] + NADH = 2 Fe(II)-[cytochrome b5] + NAD(+) + H(+). Functionally, NADH-cytochrome b5 reductase involved in endoplasmic reticulum stress response pathway. The protein is Cytochrome b5 reductase 4 (cyb5r4) of Xenopus tropicalis (Western clawed frog).